The chain runs to 508 residues: Anthranilate synthase component 1 (508 aa).

Residues serine 49 and 282-284 (PYM) contribute to the L-tryptophan site. A chorismate-binding site is contributed by 317–318 (GT). Glutamate 344 is a binding site for Mg(2+). Residues tyrosine 432, arginine 452, 466-468 (GAG), and glycine 468 each bind chorismate. Glutamate 481 is a binding site for Mg(2+).

The protein belongs to the anthranilate synthase component I family. Heterotetramer consisting of two non-identical subunits: a beta subunit (TrpG) and a large alpha subunit (TrpE). Requires Mg(2+) as cofactor.

It catalyses the reaction chorismate + L-glutamine = anthranilate + pyruvate + L-glutamate + H(+). It functions in the pathway amino-acid biosynthesis; L-tryptophan biosynthesis; L-tryptophan from chorismate: step 1/5. Feedback inhibited by tryptophan. Part of a heterotetrameric complex that catalyzes the two-step biosynthesis of anthranilate, an intermediate in the biosynthesis of L-tryptophan. In the first step, the glutamine-binding beta subunit (TrpG) of anthranilate synthase (AS) provides the glutamine amidotransferase activity which generates ammonia as a substrate that, along with chorismate, is used in the second step, catalyzed by the large alpha subunit of AS (TrpE) to produce anthranilate. In the absence of TrpG, TrpE can synthesize anthranilate directly from chorismate and high concentrations of ammonia. This Geobacillus stearothermophilus (Bacillus stearothermophilus) protein is Anthranilate synthase component 1 (trpE).